The following is a 316-amino-acid chain: MQELRFVLIVVGALAIAALLFHGLWSSKKEGKAKFGNKPLGKLDVDQGDKDSVEQERSFAPATEDDFEIIRKDRKEPDFGMENTFDSKFEADPLLGGVAEEKHSVKEEAEEIPSFVAMKNDVEDVAIQPSEVEEPMQEVVEEEIMPSAFDAPKQEMEMVEEVAPAVVEQPEEPKPEPEMQVIVLNVHCAGEEPFIGTELFDSMQQNGLIYGEMHIFHRHVDLSGNGKVLFSVANMMHPGTLEHGDPAEFSTKGISFFMTLPCYGEAEQNFNLMLRTAQQIADDMGGNVLDDKRNLMTPDRLAAYRRQIVEFNAANA.

Residues 1 to 5 (MQELR) are Periplasmic-facing. Residues 6–26 (FVLIVVGALAIAALLFHGLWS) traverse the membrane as a helical segment. Topologically, residues 27–316 (SKKEGKAKFG…QIVEFNAANA (290 aa)) are cytoplasmic. The segment at 36–65 (GNKPLGKLDVDQGDKDSVEQERSFAPATED) is disordered. The segment covering 41 to 57 (GKLDVDQGDKDSVEQER) has biased composition (basic and acidic residues).

This sequence belongs to the ZipA family. In terms of assembly, interacts with FtsZ via their C-terminal domains.

Its subcellular location is the cell inner membrane. Functionally, essential cell division protein that stabilizes the FtsZ protofilaments by cross-linking them and that serves as a cytoplasmic membrane anchor for the Z ring. Also required for the recruitment to the septal ring of downstream cell division proteins. The sequence is that of Cell division protein ZipA from Vibrio parahaemolyticus serotype O3:K6 (strain RIMD 2210633).